Consider the following 564-residue polypeptide: Dihydroxy-acid dehydratase (564 aa).

Aspartate 78 contacts Mg(2+). Cysteine 119 contributes to the [2Fe-2S] cluster binding site. Residues aspartate 120 and lysine 121 each coordinate Mg(2+). Lysine 121 carries the N6-carboxylysine modification. Residue cysteine 192 participates in [2Fe-2S] cluster binding. Glutamate 451 provides a ligand contact to Mg(2+). Serine 477 serves as the catalytic Proton acceptor.

The protein belongs to the IlvD/Edd family. As to quaternary structure, homodimer. It depends on [2Fe-2S] cluster as a cofactor. Mg(2+) serves as cofactor.

The enzyme catalyses (2R)-2,3-dihydroxy-3-methylbutanoate = 3-methyl-2-oxobutanoate + H2O. It catalyses the reaction (2R,3R)-2,3-dihydroxy-3-methylpentanoate = (S)-3-methyl-2-oxopentanoate + H2O. The protein operates within amino-acid biosynthesis; L-isoleucine biosynthesis; L-isoleucine from 2-oxobutanoate: step 3/4. It functions in the pathway amino-acid biosynthesis; L-valine biosynthesis; L-valine from pyruvate: step 3/4. Its function is as follows. Functions in the biosynthesis of branched-chain amino acids. Catalyzes the dehydration of (2R,3R)-2,3-dihydroxy-3-methylpentanoate (2,3-dihydroxy-3-methylvalerate) into 2-oxo-3-methylpentanoate (2-oxo-3-methylvalerate) and of (2R)-2,3-dihydroxy-3-methylbutanoate (2,3-dihydroxyisovalerate) into 2-oxo-3-methylbutanoate (2-oxoisovalerate), the penultimate precursor to L-isoleucine and L-valine, respectively. The chain is Dihydroxy-acid dehydratase from Nitratiruptor sp. (strain SB155-2).